A 3061-amino-acid chain; its full sequence is Genome polyprotein (3061 aa).

One can recognise a Peptidase S30 domain in the interval Lys-141 to Phe-284. Residues His-192, Asp-201, and Ser-235 each act as for P1 proteinase activity in the active site. The short motif at Lys-334–Cys-337 is the Involved in interaction with stylet and aphid transmission element. An Involved in virions binding and aphid transmission motif is present at residues Pro-592–Lys-594. The Peptidase C6 domain occupies Leu-618 to Gly-740. Catalysis depends on for helper component proteinase activity residues Cys-626 and His-699. Residues Asp-1229 to Glu-1381 form the Helicase ATP-binding domain. Gly-1242–Ser-1249 contacts ATP. The DECH box signature appears at Asp-1331–His-1334. In terms of domain architecture, Helicase C-terminal spans Asp-1400–Ser-1559. The Nuclear localization signal signature appears at Arg-1884 to Thr-1892. An O-(5'-phospho-RNA)-tyrosine modification is found at Tyr-1907. Residues Ala-2032–Glu-2250 enclose the Peptidase C4 domain. Catalysis depends on for nuclear inclusion protein A activity residues His-2077, Asp-2112, and Cys-2182. In terms of domain architecture, RdRp catalytic spans Trp-2517–Leu-2641. Positions Gly-2795–Thr-2835 are disordered. At Thr-3044 the chain carries Phosphothreonine.

It belongs to the potyviridae genome polyprotein family. As to quaternary structure, interacts with host eIF4E protein (via cap-binding region); this interaction mediates the translation of the VPg-viral RNA conjugates. Part of a complex that comprises VPg, RNA, host EIF4E and EIF4G; this interaction mediates the translation of the VPg-viral RNA conjugates. In terms of processing, VPg is uridylylated by the polymerase and is covalently attached to the 5'-end of the genomic RNA. This uridylylated form acts as a nucleotide-peptide primer for the polymerase. Post-translationally, potyviral RNA is expressed as two polyproteins which undergo post-translational proteolytic processing. Genome polyprotein is processed by NIa-pro, P1 and HC-pro proteinases resulting in the production of at least ten individual proteins. P3N-PIPO polyprotein is cleaved by P1 and HC-pro proteinases resulting in the production of three individual proteins. The P1 proteinase and the HC-pro cleave only their respective C-termini autocatalytically. 6K1 is essential for proper proteolytic separation of P3 from CI.

It localises to the host cytoplasmic vesicle. It is found in the host nucleus. The protein localises to the virion. It catalyses the reaction RNA(n) + a ribonucleoside 5'-triphosphate = RNA(n+1) + diphosphate. It carries out the reaction Hydrolyzes glutaminyl bonds, and activity is further restricted by preferences for the amino acids in P6 - P1' that vary with the species of potyvirus, e.g. Glu-Xaa-Xaa-Tyr-Xaa-Gln-|-(Ser or Gly) for the enzyme from tobacco etch virus. The natural substrate is the viral polyprotein, but other proteins and oligopeptides containing the appropriate consensus sequence are also cleaved.. The enzyme catalyses Hydrolyzes a Gly-|-Gly bond at its own C-terminus, commonly in the sequence -Tyr-Xaa-Val-Gly-|-Gly, in the processing of the potyviral polyprotein.. In terms of biological role, required for aphid transmission and also has proteolytic activity. Only cleaves a Gly-Gly dipeptide at its own C-terminus. Interacts with virions and aphid stylets. Acts as a suppressor of RNA-mediated gene silencing, also known as post-transcriptional gene silencing (PTGS), a mechanism of plant viral defense that limits the accumulation of viral RNAs. May have RNA-binding activity. Its function is as follows. Has helicase activity. It may be involved in replication. Functionally, indispensable for virus replication. Reduces the abundance of host transcripts related to jasmonic acid biosynthesis therefore altering the host defenses. In order to increase its own stability, decreases host protein degradation pathways. Indispensable for virus replication. In terms of biological role, mediates the cap-independent, EIF4E-dependent translation of viral genomic RNAs. Binds to the cap-binding site of host EIF4E and thus interferes with the host EIF4E-dependent mRNA export and translation. VPg-RNA directly binds EIF4E and is a template for transcription. Also forms trimeric complexes with EIF4E-EIF4G, which are templates for translation. Its function is as follows. Has RNA-binding and proteolytic activities. Functionally, an RNA-dependent RNA polymerase that plays an essential role in the virus replication. Involved in aphid transmission, cell-to-cell and systemis movement, encapsidation of the viral RNA and in the regulation of viral RNA amplification. The sequence is that of Genome polyprotein from Potato virus Y (strain Hungarian) (PVY).